The chain runs to 99 residues: Large ribosomal subunit protein eL42 (99 aa).

Belongs to the eukaryotic ribosomal protein eL42 family.

This chain is Large ribosomal subunit protein eL42 (RPL44), found in Chlamydomonas reinhardtii (Chlamydomonas smithii).